The following is a 467-amino-acid chain: Ribulose bisphosphate carboxylase large chain (467 aa).

K5 carries the post-translational modification N6,N6,N6-trimethyllysine. Positions 114 and 164 each coordinate substrate. K166 functions as the Proton acceptor in the catalytic mechanism. Position 168 (K168) interacts with substrate. Mg(2+)-binding residues include K192, D194, and E195. K192 bears the N6-carboxylysine mark. The Proton acceptor role is filled by H285. Residues R286, H318, and S370 each contribute to the substrate site.

Belongs to the RuBisCO large chain family. Type I subfamily. As to quaternary structure, heterohexadecamer of 8 large chains and 8 small chains; disulfide-linked. The disulfide link is formed within the large subunit homodimers. It depends on Mg(2+) as a cofactor. In terms of processing, the disulfide bond which can form in the large chain dimeric partners within the hexadecamer appears to be associated with oxidative stress and protein turnover.

It is found in the plastid. The protein resides in the chloroplast. The enzyme catalyses 2 (2R)-3-phosphoglycerate + 2 H(+) = D-ribulose 1,5-bisphosphate + CO2 + H2O. It catalyses the reaction D-ribulose 1,5-bisphosphate + O2 = 2-phosphoglycolate + (2R)-3-phosphoglycerate + 2 H(+). In terms of biological role, ruBisCO catalyzes two reactions: the carboxylation of D-ribulose 1,5-bisphosphate, the primary event in carbon dioxide fixation, as well as the oxidative fragmentation of the pentose substrate in the photorespiration process. Both reactions occur simultaneously and in competition at the same active site. This is Ribulose bisphosphate carboxylase large chain from Jasminum simplicifolium subsp. suavissimum (Native jasmine).